We begin with the raw amino-acid sequence, 189 residues long: MSCCGCSGGCGSSCGGCGSNCCKPVCCCKPVCCCVPACSCSSCGDCKGGCGSCGGCKGGCGSCGGCKGGCGSCGGCKGGCGSCGGCGSCGGCKGGCSSCGGCGSCGGCKGGCGSCGGCGSCGGCGSCGCCQSSCCKPCCCQSSCCKPCCCQSSCCQSSCCKPCCCQSSCCKPCCCQSSCCAPVCCQCKI.

A run of 8 repeats spans residues 21 to 24, 27 to 30, 33 to 36, 134 to 137, 144 to 147, 159 to 162, 169 to 172, and 179 to 182. An 8 X 4 AA repeats of C-C-X-P region spans residues 27–182; it reads CCKPVCCCVP…CCCQSSCCAP (156 aa).

The protein belongs to the KRTAP type 5 family. As to quaternary structure, interacts with hair keratins.

Its function is as follows. In the hair cortex, hair keratin intermediate filaments are embedded in an interfilamentous matrix, consisting of hair keratin-associated protein (KRTAP), which are essential for the formation of a rigid and resistant hair shaft through their extensive disulfide bond cross-linking with abundant cysteine residues of hair keratins. The matrix proteins include the high-sulfur and high-glycine-tyrosine keratins. In Mus musculus (Mouse), this protein is Keratin-associated protein 5-2.